Here is a 315-residue protein sequence, read N- to C-terminus: MIRIGTRGSLLATTQAALVRDALIANGHPAELVIVNTAGDQSSASIDSLGVGVFTTALRAAIEEGCVDAAVHSYKDLPTADDPRFTVAAIPPRNDPRDAVVTRDELVLAELPAGSLVGTSSPRRAAQLRALGLGLEIRPLRGNLDTRLNRVSSGDLDAIVVARAGLARLGRLDEVTETLDPVQMVPAPAQGAIAVECRAGDSRLVAVLAALDDADTRAAVTAERVLLAELEAGCSAPVGAIAQVVESIDGEGRVFEELSLRGCVAALDGSDVIRASGISTSGRASELGLAVAVELFELGARELMWGARSDRARGS.

Cys234 is modified (S-(dipyrrolylmethanemethyl)cysteine).

This sequence belongs to the HMBS family. Monomer. It depends on dipyrromethane as a cofactor.

The enzyme catalyses 4 porphobilinogen + H2O = hydroxymethylbilane + 4 NH4(+). The protein operates within porphyrin-containing compound metabolism; protoporphyrin-IX biosynthesis; coproporphyrinogen-III from 5-aminolevulinate: step 2/4. Its function is as follows. Tetrapolymerization of the monopyrrole PBG into the hydroxymethylbilane pre-uroporphyrinogen in several discrete steps. In Mycobacterium leprae (strain TN), this protein is Porphobilinogen deaminase (hemC).